The chain runs to 117 residues: MTRIKRGYIARRRRTKLRLFASSFRGAHSRLTRTMTQQRIRALVSAHRDRGKRKRDFRRLWITRINAVIHETGVFYSYNRFIHNLYKKQLLLNRKILAQIALLNRSCLYTISNEIKE.

The protein belongs to the bacterial ribosomal protein bL20 family.

The protein localises to the plastid. It is found in the chloroplast. Its function is as follows. Binds directly to 23S ribosomal RNA and is necessary for the in vitro assembly process of the 50S ribosomal subunit. It is not involved in the protein synthesizing functions of that subunit. The polypeptide is Large ribosomal subunit protein bL20c (Draba nemorosa (Woodland whitlowgrass)).